Consider the following 126-residue polypeptide: Holo-[acyl-carrier-protein] synthase (126 aa).

Mg(2+)-binding residues include Asp6 and Glu55.

It belongs to the P-Pant transferase superfamily. AcpS family. The cofactor is Mg(2+).

It is found in the cytoplasm. The enzyme catalyses apo-[ACP] + CoA = holo-[ACP] + adenosine 3',5'-bisphosphate + H(+). Functionally, transfers the 4'-phosphopantetheine moiety from coenzyme A to a Ser of acyl-carrier-protein. In Chlorobium limicola (strain DSM 245 / NBRC 103803 / 6330), this protein is Holo-[acyl-carrier-protein] synthase.